The sequence spans 110 residues: Large ribosomal subunit protein uL22 (110 aa).

This sequence belongs to the universal ribosomal protein uL22 family. As to quaternary structure, part of the 50S ribosomal subunit.

In terms of biological role, this protein binds specifically to 23S rRNA; its binding is stimulated by other ribosomal proteins, e.g. L4, L17, and L20. It is important during the early stages of 50S assembly. It makes multiple contacts with different domains of the 23S rRNA in the assembled 50S subunit and ribosome. Functionally, the globular domain of the protein is located near the polypeptide exit tunnel on the outside of the subunit, while an extended beta-hairpin is found that lines the wall of the exit tunnel in the center of the 70S ribosome. The sequence is that of Large ribosomal subunit protein uL22 from Haemophilus ducreyi (strain 35000HP / ATCC 700724).